Here is a 438-residue protein sequence, read N- to C-terminus: Protein SPMIP7 (438 aa).

In terms of tissue distribution, testis-specific.

In terms of biological role, essential for normal spermatogenesis. The chain is Protein SPMIP7 from Homo sapiens (Human).